Here is a 240-residue protein sequence, read N- to C-terminus: Large ribosomal subunit protein bL25 (240 aa).

Residues 1-24 (MATVMEFKATARPKSGKGAARAER) are disordered.

It belongs to the bacterial ribosomal protein bL25 family. CTC subfamily. Part of the 50S ribosomal subunit; part of the 5S rRNA/L5/L18/L25 subcomplex. Contacts the 5S rRNA. Binds to the 5S rRNA independently of L5 and L18.

This is one of the proteins that binds to the 5S RNA in the ribosome where it forms part of the central protuberance. The sequence is that of Large ribosomal subunit protein bL25 from Rhodopseudomonas palustris (strain HaA2).